The primary structure comprises 574 residues: FAD-linked oxidoreductase sor8 (574 aa).

Residues 1-27 (MYAPPFVRAFGIAVLAVLPSFSSPATA) form the signal peptide. N-linked (GlcNAc...) asparagine glycans are attached at residues Asn-58, Asn-112, Asn-136, Asn-266, Asn-312, Asn-363, and Asn-384. The FAD-binding PCMH-type domain occupies 126-305 (VIGTYVQYAV…YSMTVKAHAN (180 aa)).

The protein belongs to the oxygen-dependent FAD-linked oxidoreductase family. FAD is required as a cofactor.

It functions in the pathway secondary metabolite biosynthesis. Functionally, FAD-linked oxidoreductase; part of the SOR gene cluster that mediates the biosynthesis of sorbicillinoids, a diverse group of yellow secondary metabolites that restrict growth of competing pathogenic fungi but not of bacteria. Sorbicillinoids biosynthesis requires the action of two PKSs. The SOR cluster is required for the production of trichodimerol and dihydrotrichotetronin, with sor2 being sufficient for production of trichodimerol, but not dihydrotrichotetronin in the light. Sor1 iteratively combines three acetyl units and the growing chain is modified by the ketoacyl reductase subunit, and optional by the enoyl reductase subunit in the second cycle. The polyketide is then handed over to the PKS sor2, which adds three more acetyl units, and two methyl groups. Sor2 releases an aldehyde, which undergoes spontaneous cyclization resulting in the formation of sorbicillin or 2',3'-dihydrosorbicillin. The monooxygenase sor5 oxidizes sorbicillin and 2',3'-dihydrosorbicillin to 2',3'-dihydrosorbicillinol and sorbicillinol, respectively. The oxidoreductase sor8 further converts sorbicillinol into oxosorbicillinol. Sorbicillinol is the building block for the other sorbicillinoids such as disorbicillinol, bisvertinolon, dihydrobisvertinolone, and dihydrotrichotetronine. The sequence is that of FAD-linked oxidoreductase sor8 from Hypocrea jecorina (strain QM6a) (Trichoderma reesei).